A 281-amino-acid chain; its full sequence is MYDLAGKHVCYVADCGGIALETSKVLMTKNIAKLAILQSVENQPAIAQLQSIKHSTQIFFWTFDVTMAREEMKKYFDEVMVQMDYIDVLINGATLCDERNIDATINTNLTGMMNTVATVLPYMDRKMGGSGGLIVNVTSVIGLDPSPVFCAYSASKFGVIGFTRSLADPLYYNQNGVAVMAVCCGPTKVFVDRELNAFLEYGQTFADRLRLAPCQSTAVCGQNIVNAIERSQNGQIWIADKGGLELVTLHWYWHMADQFISYMQSTDDEDQECFLSAAYRK.

An NAD(+)-binding site is contributed by 11–34; sequence YVADCGGIALETSKVLMTKNIAKL. Ser139 lines the substrate pocket. The active-site Proton acceptor is Tyr152.

Belongs to the short-chain dehydrogenases/reductases (SDR) family.

The sequence is that of Alcohol dehydrogenase-related 31 kDa protein (Adhr) from Drosophila ambigua (Fruit fly).